The chain runs to 617 residues: NADPH-dependent diflavin oxidoreductase 1 (617 aa).

A Flavodoxin-like domain is found at Pro-3 to Leu-147. FMN is bound by residues Ser-9–Ala-14, Ser-56–Gly-59, Leu-94–Cys-103, and Glu-129. The 240-residue stretch at Asp-226–Pro-465 folds into the FAD-binding FR-type domain. Residues Arg-404 to Ser-407 and Gly-438 to Ser-441 contribute to the FAD site. NADP(+) contacts are provided by residues Thr-479, Ser-534–Arg-535, and Arg-540–Gln-544. Trp-617 serves as a coordination point for FAD.

The protein belongs to the NADPH-dependent diflavin oxidoreductase NDOR1 family. It in the N-terminal section; belongs to the flavodoxin family. This sequence in the C-terminal section; belongs to the flavoprotein pyridine nucleotide cytochrome reductase family. In terms of assembly, interacts with DRE2; as part of the cytosolic iron-sulfur (Fe-S) protein assembly (CIA) machinery. The cofactor is FAD. FMN is required as a cofactor.

Its subcellular location is the cytoplasm. It localises to the mitochondrion. The enzyme catalyses 2 oxidized [2Fe-2S]-[protein] + NADPH = 2 reduced [2Fe-2S]-[protein] + NADP(+) + H(+). NADPH-dependent reductase which is a central component of the cytosolic iron-sulfur (Fe-S) protein assembly (CIA) machinery. Transfers electrons from NADPH via its FAD and FMN prosthetic groups to the [2Fe-2S] cluster of DRE2, another key component of the CIA machinery. In turn, this reduced cluster provides electrons for assembly of cytosolic iron-sulfur cluster proteins. Positively controls H(2)O(2)-induced cell death. The chain is NADPH-dependent diflavin oxidoreductase 1 from Cryptococcus neoformans var. neoformans serotype D (strain B-3501A) (Filobasidiella neoformans).